The primary structure comprises 198 residues: uncharacterized protein (198 aa).

4 consecutive transmembrane segments (helical) span residues 20–40 (VIVGVVLGLAGTGALIGGLWA), 70–90 (FFVAPCLMLGLLTVLAVTASV), 107–127 (LAIGLMICAATAAAVGALLVW), and 164–184 (VAATVLWPAGIAALVYAVLAA).

It to M.tuberculosis Rv1591.

It localises to the cell membrane. This is an uncharacterized protein from Mycobacterium leprae (strain TN).